The sequence spans 290 residues: Phosphatidylserine decarboxylase proenzyme (290 aa).

Catalysis depends on charge relay system; for autoendoproteolytic cleavage activity residues aspartate 96, histidine 153, and serine 257. Serine 257 serves as the catalytic Schiff-base intermediate with substrate; via pyruvic acid; for decarboxylase activity. At serine 257 the chain carries Pyruvic acid (Ser); by autocatalysis.

It belongs to the phosphatidylserine decarboxylase family. PSD-B subfamily. Prokaryotic type I sub-subfamily. Heterodimer of a large membrane-associated beta subunit and a small pyruvoyl-containing alpha subunit. It depends on pyruvate as a cofactor. In terms of processing, is synthesized initially as an inactive proenzyme. Formation of the active enzyme involves a self-maturation process in which the active site pyruvoyl group is generated from an internal serine residue via an autocatalytic post-translational modification. Two non-identical subunits are generated from the proenzyme in this reaction, and the pyruvate is formed at the N-terminus of the alpha chain, which is derived from the carboxyl end of the proenzyme. The autoendoproteolytic cleavage occurs by a canonical serine protease mechanism, in which the side chain hydroxyl group of the serine supplies its oxygen atom to form the C-terminus of the beta chain, while the remainder of the serine residue undergoes an oxidative deamination to produce ammonia and the pyruvoyl prosthetic group on the alpha chain. During this reaction, the Ser that is part of the protease active site of the proenzyme becomes the pyruvoyl prosthetic group, which constitutes an essential element of the active site of the mature decarboxylase.

Its subcellular location is the cell membrane. It carries out the reaction a 1,2-diacyl-sn-glycero-3-phospho-L-serine + H(+) = a 1,2-diacyl-sn-glycero-3-phosphoethanolamine + CO2. Its pathway is phospholipid metabolism; phosphatidylethanolamine biosynthesis; phosphatidylethanolamine from CDP-diacylglycerol: step 2/2. Its function is as follows. Catalyzes the formation of phosphatidylethanolamine (PtdEtn) from phosphatidylserine (PtdSer). The sequence is that of Phosphatidylserine decarboxylase proenzyme from Haemophilus influenzae (strain 86-028NP).